Reading from the N-terminus, the 432-residue chain is Vacuolar protein sorting-associated protein 38 (432 aa).

A glycan (N-linked (GlcNAc...) asparagine) is linked at Asn20. The stretch at 216–287 forms a coiled coil; it reads LDTYQENIKM…KEAIEKLQKK (72 aa). Residues 348–365 form a helical membrane-spanning segment; the sequence is IINAMLGFYSLFIVIYSY.

This sequence belongs to the VPS38 family. As to quaternary structure, component of the VPS34 PI3-kinase complex II composed of VPS15, VPS30, VPS34 and VPS38.

It localises to the golgi apparatus. Its subcellular location is the trans-Golgi network membrane. The protein resides in the endosome membrane. In terms of biological role, involved in endosome-to-Golgi retrograde transport as part of the VPS34 PI3-kinase complex II. This complex is required for the endosome-to-Golgi retrieval of PEP1 and KEX2, and the recruitment of VPS5 and VPS7, two components of the retromer complex, to endosomal membranes (probably through generating a specific pool of phosphatidylinositol 3-phosphate allowing the recruitment of the retromer complex proteins to the endosome). Mediates the interaction between VPS30 and the VPS34-VPS15 core complex, leading to the recruitment of VPS30 to the membrane. This chain is Vacuolar protein sorting-associated protein 38, found in Candida glabrata (strain ATCC 2001 / BCRC 20586 / JCM 3761 / NBRC 0622 / NRRL Y-65 / CBS 138) (Yeast).